A 388-amino-acid chain; its full sequence is Arginine biosynthesis bifunctional protein ArgJ 2 (388 aa).

5 residues coordinate substrate: Thr145, Lys167, Thr178, Glu257, and Asn381. Thr178 functions as the Nucleophile in the catalytic mechanism.

Belongs to the ArgJ family. In terms of assembly, heterotetramer of two alpha and two beta chains.

The protein localises to the cytoplasm. It carries out the reaction N(2)-acetyl-L-ornithine + L-glutamate = N-acetyl-L-glutamate + L-ornithine. It catalyses the reaction L-glutamate + acetyl-CoA = N-acetyl-L-glutamate + CoA + H(+). It functions in the pathway amino-acid biosynthesis; L-arginine biosynthesis; L-ornithine and N-acetyl-L-glutamate from L-glutamate and N(2)-acetyl-L-ornithine (cyclic): step 1/1. The protein operates within amino-acid biosynthesis; L-arginine biosynthesis; N(2)-acetyl-L-ornithine from L-glutamate: step 1/4. Its function is as follows. Catalyzes two activities which are involved in the cyclic version of arginine biosynthesis: the synthesis of N-acetylglutamate from glutamate and acetyl-CoA as the acetyl donor, and of ornithine by transacetylation between N(2)-acetylornithine and glutamate. The protein is Arginine biosynthesis bifunctional protein ArgJ 2 of Clostridium acetobutylicum (strain ATCC 824 / DSM 792 / JCM 1419 / IAM 19013 / LMG 5710 / NBRC 13948 / NRRL B-527 / VKM B-1787 / 2291 / W).